The chain runs to 371 residues: Neuropeptide S receptor (371 aa).

Over 1 to 52 the chain is Extracellular; that stretch reads MPANLTEGSFHANQTVPMLDSSPVACTEIVTFTEALVAEEWGSFYSSFKTEQ. N-linked (GlcNAc...) asparagine glycosylation is found at Asn4 and Asn13. Residues 53-73 form a helical membrane-spanning segment; that stretch reads LITLWVLFVVTIVGNSVVLFS. At 74 to 82 the chain is on the cytoplasmic side; sequence TCRRKRKSR. The chain crosses the membrane as a helical span at residues 83-103; sequence MTFFVTQLAITDSFTGLINIL. Residues 104–123 lie on the Extracellular side of the membrane; it reads TDIIWRFTGDFMAPDLVCRV. Cys121 and Cys197 are disulfide-bonded. A helical transmembrane segment spans residues 124-144; the sequence is VRYLQVVLLYASTYVLVSLSI. At 145 to 164 the chain is on the cytoplasmic side; the sequence is DRYHAIVYPMKFLQGEKQAK. Residues 165–185 form a helical membrane-spanning segment; the sequence is VLIGIAWSLSFLFSIPTLIIF. Residues 186–212 lie on the Extracellular side of the membrane; sequence GKRTLSNGEVQCWALWPDDSYWTPYMT. A helical transmembrane segment spans residues 213-233; sequence IVAFLVYFIPLAIISVIYGLV. Topologically, residues 234 to 275 are cytoplasmic; sequence IRTIWMKSKTHETVISNCSDGKLCCSYNRGLISKAKIKAIKY. Residues 276–296 form a helical membrane-spanning segment; sequence SIVIILAFICCWSPYFLFDIL. The Extracellular segment spans residues 297–312; the sequence is DNFNVLPDTKERFYAS. A helical membrane pass occupies residues 313-333; that stretch reads VIIQNLPALNSAINPLIYCIF. The Cytoplasmic portion of the chain corresponds to 334-371; that stretch reads SSSICSPCKMQRSQDSRMTYRERSERHEMQILSKPEFI.

This sequence belongs to the G-protein coupled receptor 1 family. Vasopressin/oxytocin receptor subfamily.

It is found in the cell membrane. Functionally, G-protein coupled receptor for neuropeptide S (NPS). Promotes mobilization of intracellular Ca(2+) stores. Inhibits cell growth in response to NPS binding. Involved in pathogenesis of asthma and other IgE-mediated diseases. This is Neuropeptide S receptor (Npsr1) from Mus musculus (Mouse).